The following is a 153-amino-acid chain: Deoxyuridine 5'-triphosphate nucleotidohydrolase (153 aa).

Residues 71-73 (RSG), asparagine 84, 88-90 (LID), and methionine 98 contribute to the substrate site.

Belongs to the dUTPase family. The cofactor is Mg(2+).

The enzyme catalyses dUTP + H2O = dUMP + diphosphate + H(+). It functions in the pathway pyrimidine metabolism; dUMP biosynthesis; dUMP from dCTP (dUTP route): step 2/2. In terms of biological role, this enzyme is involved in nucleotide metabolism: it produces dUMP, the immediate precursor of thymidine nucleotides and it decreases the intracellular concentration of dUTP so that uracil cannot be incorporated into DNA. The protein is Deoxyuridine 5'-triphosphate nucleotidohydrolase of Wigglesworthia glossinidia brevipalpis.